The chain runs to 552 residues: Hydroxylamine reductase (552 aa).

The [2Fe-2S] cluster site is built by cysteine 5, cysteine 8, cysteine 20, and cysteine 27. Positions 251, 275, 319, 407, 435, 460, 494, and 496 each coordinate hybrid [4Fe-2O-2S] cluster. Cysteine 407 bears the Cysteine persulfide mark.

Belongs to the HCP family. [2Fe-2S] cluster serves as cofactor. The cofactor is hybrid [4Fe-2O-2S] cluster.

The protein localises to the cytoplasm. It carries out the reaction A + NH4(+) + H2O = hydroxylamine + AH2 + H(+). Catalyzes the reduction of hydroxylamine to form NH(3) and H(2)O. The protein is Hydroxylamine reductase of Shigella boydii serotype 4 (strain Sb227).